The primary structure comprises 640 residues: Glutamyl-tRNA(Gln) amidotransferase subunit E (640 aa).

This sequence belongs to the GatB/GatE family. GatE subfamily. Heterodimer of GatD and GatE.

It carries out the reaction L-glutamyl-tRNA(Gln) + L-glutamine + ATP + H2O = L-glutaminyl-tRNA(Gln) + L-glutamate + ADP + phosphate + H(+). Allows the formation of correctly charged Gln-tRNA(Gln) through the transamidation of misacylated Glu-tRNA(Gln) in organisms which lack glutaminyl-tRNA synthetase. The reaction takes place in the presence of glutamine and ATP through an activated gamma-phospho-Glu-tRNA(Gln). The GatDE system is specific for glutamate and does not act on aspartate. The protein is Glutamyl-tRNA(Gln) amidotransferase subunit E of Methanopyrus kandleri (strain AV19 / DSM 6324 / JCM 9639 / NBRC 100938).